A 1728-amino-acid polypeptide reads, in one-letter code: Lysophospholipase NTE1 (1728 aa).

Residues 1 to 44 (MDSSSIAHESDIVSTERNILPERFISNKQQGNYLEDGSGDGNGK) are Cytoplasmic-facing. Residues 45–65 (AAEHWLLAAIFNFFWVISYFI) traverse the membrane as a helical segment. Over 66-97 (SGSTHIAFRSSWYIVSLLLLKFPKWIIVEANH) the chain is Lumenal. A helical transmembrane segment spans residues 98–118 (IHLTIPFSVLVVTLAIIFYVS). At 119 to 1728 (YEFLKGRLLS…GFFLHRRNSI (1610 aa)) the chain is on the cytoplasmic side. A compositionally biased stretch (low complexity) spans 141-150 (SLNSKNSKSS). 6 disordered regions span residues 141–167 (SLNS…RRRR), 285–368 (RKKK…DEST), 406–436 (NDNV…LSTS), 454–488 (TEAS…VTTP), 596–660 (NLQK…TGSR), and 687–756 (ASPS…FTSF). Positions 153–162 (LHHDSKDSNT) are enriched in basic and acidic residues. 2 stretches are compositionally biased toward polar residues: residues 293-303 (SRHGQYNNNSD) and 326-336 (MRSSSRNQNIP). Over residues 345–367 (SSDEESDINDGDSESQSESDDES) the composition is skewed to acidic residues. Composition is skewed to polar residues over residues 406-424 (NDNV…NYTN), 454-479 (TEAS…SKSI), and 599-609 (KGFQSPTSSRL). Positions 610–628 (TSNFNGNSNNQRTNSRNSQ) are enriched in low complexity. Composition is skewed to polar residues over residues 642–657 (ELSQ…TPIT) and 729–756 (IYNN…FTSF). A nucleoside 3',5'-cyclic phosphate is bound by residues 854–987 (SPTL…LTSL) and 983–1121 (SLTS…VAKK). The segment at 1034 to 1055 (PELEENSTDYPNDGEEKDSSRD) is disordered. Over residues 1036 to 1049 (LEENSTDYPNDGEE) the composition is skewed to acidic residues. The PNPLA domain occupies 1422 to 1586 (LVLGGGGARG…VDNLPVLEMK (165 aa)). Positions 1426–1431 (GGGARG) match the GXGXXG motif. The GXSXG motif lies at 1453–1457 (GTSIG). S1455 functions as the Nucleophile in the catalytic mechanism. The Proton acceptor role is filled by D1573. The DGA/G signature appears at 1573–1575 (DGG).

The protein belongs to the NTE family.

The protein resides in the endoplasmic reticulum membrane. The catalysed reaction is a 1-acyl-sn-glycero-3-phosphocholine + H2O = sn-glycerol 3-phosphocholine + a fatty acid + H(+). Inhibited by organophosphorus esters. Functionally, intracellular phospholipase B that catalyzes the double deacylation of phosphatidylcholine (PC) to glycerophosphocholine (GroPCho). Plays an important role in membrane lipid homeostasis. Responsible for the rapid PC turnover in response to inositol, elevated temperatures, or when choline is present in the growth medium. The sequence is that of Lysophospholipase NTE1 (NTE1) from Candida glabrata (strain ATCC 2001 / BCRC 20586 / JCM 3761 / NBRC 0622 / NRRL Y-65 / CBS 138) (Yeast).